The primary structure comprises 118 residues: MEDQEMHLKVRRVADKFTESMYFLANEPSVALYRLQEHVRRSLPELVQHKTDMQSWEEQSQGAIYTVEYACSAVKSMTNSSIYFKNIDSLLRQTISMKEQISNSQGRSPHVSAPSASS.

A compositionally biased stretch (polar residues) spans 98-107; sequence KEQISNSQGR. The segment at 98–118 is disordered; sequence KEQISNSQGRSPHVSAPSASS.

It belongs to the BORCS8 family.

It is found in the lysosome membrane. In terms of biological role, as part of a BORC-like complex, it may play a role in the movement and localization of lysosomes at the cell periphery. Associated with the cytosolic face of lysosomes, this complex may couple lysosomes to microtubule plus-end-directed kinesin motors, driving lysosome movement toward the cell periphery. In Tetraodon nigroviridis (Spotted green pufferfish), this protein is BLOC-1-related complex subunit 8.